A 238-amino-acid chain; its full sequence is Lipid transferase CIDEC (238 aa).

The tract at residues 1 to 35 (MDYAMKSLSLLYPRSLSRHVAVSTAVVTQQLVSEP) is required for liquid-liquid phase separation (LLPS). Positions 41-118 (RARPCRVSTA…VLQKGQKWKS (78 aa)) constitute a CIDE-N domain.

This sequence belongs to the CIDE family. In terms of assembly, homodimer. Interacts with CIDEA. Homooligomer; undergoes liquid-liquid phase separation (LLPS) via its N-terminus, facilitating lipid droplet fusion, occurs at the lipid droplet contact sites. Interacts with PLIN1. Interacts with NFAT5; this interaction is direct and retains NFAT5 in the cytoplasm. Interacts with CEBPB. Interacts with isoform CLSTN3beta of CLSTN3; inhibiting the lipid transferase activity of CIDEC. Ubiquitinated and targeted to proteasomal degradation, resulting in a short half-life (about 15 minutes in 3T3-L1 cells). Protein stability depends on triaclyglycerol synthesis, fatty acid availability and lipid droplet formation.

The protein resides in the lipid droplet. It localises to the endoplasmic reticulum. The protein localises to the nucleus. The enzyme catalyses a triacyl-sn-glycerol(in) = a triacyl-sn-glycerol(out). Its function is as follows. Lipid transferase specifically expressed in white adipose tissue, which promotes unilocular lipid droplet formation by mediating lipid droplet fusion. Lipid droplet fusion promotes their enlargement, restricting lipolysis and favoring lipid storage. Localizes on the lipid droplet surface, at focal contact sites between lipid droplets, and mediates atypical lipid droplet fusion by undergoing liquid-liquid phase separation (LLPS) and promoting directional net neutral lipid transfer from the smaller to larger lipid droplets. The transfer direction may be driven by the internal pressure difference between the contacting lipid droplet pair. Its role in neutral lipid transfer and lipid droplet enlargement is activated by the interaction with PLIN1. May also act as a CEBPB coactivator in the white adipose tissue to control the expression of a subset of CEBPB downstream target genes, including SOCS1, SOCS3, TGFB1, TGFBR1, ID2 and XDH. When overexpressed in preadipocytes, induces apoptosis or increases cell susceptibility to apoptosis induced by serum deprivation or TGFB treatment. This Rattus norvegicus (Rat) protein is Lipid transferase CIDEC.